We begin with the raw amino-acid sequence, 510 residues long: 2,3-bisphosphoglycerate-independent phosphoglycerate mutase (510 aa).

2 residues coordinate Mn(2+): Asp-12 and Ser-62. Ser-62 serves as the catalytic Phosphoserine intermediate. Substrate-binding positions include His-123, Arg-153–Asp-154, Arg-185, Arg-191, Arg-260–Arg-263, and Lys-333. Asp-400, His-404, Asp-441, His-442, and His-460 together coordinate Mn(2+).

This sequence belongs to the BPG-independent phosphoglycerate mutase family. Monomer. Mn(2+) is required as a cofactor.

The catalysed reaction is (2R)-2-phosphoglycerate = (2R)-3-phosphoglycerate. Its pathway is carbohydrate degradation; glycolysis; pyruvate from D-glyceraldehyde 3-phosphate: step 3/5. Its function is as follows. Catalyzes the interconversion of 2-phosphoglycerate and 3-phosphoglycerate. In Clostridium acetobutylicum (strain ATCC 824 / DSM 792 / JCM 1419 / IAM 19013 / LMG 5710 / NBRC 13948 / NRRL B-527 / VKM B-1787 / 2291 / W), this protein is 2,3-bisphosphoglycerate-independent phosphoglycerate mutase.